We begin with the raw amino-acid sequence, 1045 residues long: FERM, ARHGEF and pleckstrin domain-containing protein 1 (1045 aa).

Residues 1-37 (MGEIEQRPTPGSRLGAPENSGISTLERGQKPPPTPSG) form a disordered region. Residues S20 and S23 each carry the phosphoserine modification. T24 is modified (phosphothreonine). The 281-residue stretch at 40–320 (VSIKIQMLDD…EHHAFFRLFE (281 aa)) folds into the FERM domain. Phosphoserine is present on residues S340, S373, S389, S403, S418, S427, and S433. The tract at residues 361 to 534 (FERKHSKIHS…TDDEDEGRRK (174 aa)) is disordered. Positions 373–396 (SLASQPTELNSEVLEQSQQSTSLT) are enriched in polar residues. Polar residues-rich tracts occupy residues 471–489 (TGSLTGSPHLSELSVNSQG) and 496–511 (VTLSPNLSPDTKQASP). S510 and S514 each carry phosphoserine. The 191-residue stretch at 540 to 730 (KAYFIAKEVS…TEMVAQLHGT (191 aa)) folds into the DH domain. One can recognise a PH 1 domain in the interval 759–856 (EFIRLGSLSK…WVEDIQMAID (98 aa)). S833, S872, and S878 each carry phosphoserine. Residues 864–903 (PAPEFLASSPPDNKSPDEATAADQESEDDLSASRTSLERQ) form a disordered region. A Phosphothreonine modification is found at T883. S889, S896, and S899 each carry phosphoserine. One can recognise a PH 2 domain in the interval 932–1029 (ENQLSGNLLR…WMEVIRSATS (98 aa)).

Interacts with CADM1. Interacts with RAC1. In terms of tissue distribution, detected in cAMP-treated chondrocytes, but not in untreated chondrocytes. Detected in fetal brain, heart and spleen, and in adult testis, kidney and lung.

The protein localises to the cell membrane. Its subcellular location is the synapse. The protein resides in the synaptosome. It is found in the cytoplasm. It localises to the cytosol. The protein localises to the cell projection. Its subcellular location is the filopodium. The protein resides in the dendrite. It is found in the dendritic spine. Functionally, functions as a guanine nucleotide exchange factor for RAC1. May play a role in semaphorin signaling. Plays a role in the assembly and disassembly of dendritic filopodia, the formation of dendritic spines, regulation of dendrite length and ultimately the formation of synapses. This Homo sapiens (Human) protein is FERM, ARHGEF and pleckstrin domain-containing protein 1 (FARP1).